The chain runs to 226 residues: PKHD-type hydroxylase MADE_1018490 (226 aa).

Positions Arg77–Ser177 constitute a Fe2OG dioxygenase domain. 3 residues coordinate Fe cation: His95, Asp97, and His158. Residue Arg168 coordinates 2-oxoglutarate.

The cofactor is Fe(2+). Requires L-ascorbate as cofactor.

The chain is PKHD-type hydroxylase MADE_1018490 from Alteromonas mediterranea (strain DSM 17117 / CIP 110805 / LMG 28347 / Deep ecotype).